The primary structure comprises 170 residues: Ribosome maturation factor RimM (170 aa).

The 74-residue stretch at 95–168 (EDAYYYHEIV…IIKVQLMEGM (74 aa)) folds into the PRC barrel domain.

It belongs to the RimM family. Binds ribosomal protein uS19.

The protein localises to the cytoplasm. Functionally, an accessory protein needed during the final step in the assembly of 30S ribosomal subunit, possibly for assembly of the head region. Essential for efficient processing of 16S rRNA. May be needed both before and after RbfA during the maturation of 16S rRNA. It has affinity for free ribosomal 30S subunits but not for 70S ribosomes. In Oceanobacillus iheyensis (strain DSM 14371 / CIP 107618 / JCM 11309 / KCTC 3954 / HTE831), this protein is Ribosome maturation factor RimM.